The primary structure comprises 815 residues: MSEVERTTTIPDEIAILPLLGTVAYPQTIMPLAIGQPESIRLIDDLMAGQRIVGLMALKNEDERPNPVLPEDFYQLGSAAVVHKLMKLPDGTLRAAMQVLERIEIVEIIQTEPYYRAKIRVMPDALAESEQLEVTALMRSIGTIASQIAPLIPQFPTELLNSVLSEEDPRRLAYLVASYARMSVTDRQAVLAEPSIKQKLLKLNEVLTRELNVLQIGQQIQSQVQDEMSKTQREYVLREQLKAIRKELGENNEQEVEVDRLAEQIEAAGMSAEAHQQAMRELDRLRQMPTAAAEYSVIRGYLETLIALPWQKRSDDTIDVAQATEVLDADHYGLDEIKERILDYLAVRELRRKRSPERDPGRGAILCFVGPPGVGKTSLGRSIAKAMNREFVRLSLGGVHDEAEIRGHRRTYIGAMPGSLIQAIRRSGVNNPVVLLDEIDKLSSDHRGDPTSAMLEVLDPAQNTNFRDHYLDVAWDLSPVMFIATANTLQTIPAPLRDRLEIIQLGSYTMREKYEIASRYLVPEQREQHSLAPNEVEIDHEALLVAIEEYTREAGVRNLEQQIGTLMRKAARQVALGSATPIVLDPAKTREYLGKRRYFSEIHERTDRPGIVTGLVWTPVGGDIIFIEATKMTGRGNFALSGQLGDVMKESARAALSWVRAEGEAYGIDPNFAQHYDLHVHVPAGAQPKDGPSAGIAMATALVSLLTGRVLRDDVAMTGEITLRGKVLPIGGVREKVLAAHRAGIRTIILPQRNLADLDEIPADVLAEVQFHGVEHVGQVIELALRAEASEAPVSVPESAVMPNLFQSDVEVLVH.

In terms of domain architecture, Lon N-terminal spans 14-211 (IAILPLLGTV…KLNEVLTREL (198 aa)). ATP is bound at residue 370 to 377 (GPPGVGKT). The Lon proteolytic domain maps to 606 to 787 (TDRPGIVTGL…GQVIELALRA (182 aa)). Active-site residues include Ser-693 and Lys-736.

It belongs to the peptidase S16 family. Homohexamer. Organized in a ring with a central cavity.

The protein localises to the cytoplasm. It catalyses the reaction Hydrolysis of proteins in presence of ATP.. Functionally, ATP-dependent serine protease that mediates the selective degradation of mutant and abnormal proteins as well as certain short-lived regulatory proteins. Required for cellular homeostasis and for survival from DNA damage and developmental changes induced by stress. Degrades polypeptides processively to yield small peptide fragments that are 5 to 10 amino acids long. Binds to DNA in a double-stranded, site-specific manner. This is Lon protease 1 from Herpetosiphon aurantiacus (strain ATCC 23779 / DSM 785 / 114-95).